We begin with the raw amino-acid sequence, 383 residues long: 8-amino-7-oxononanoate synthase (383 aa).

Residue Arg23 coordinates substrate. A pyridoxal 5'-phosphate-binding site is contributed by 110–111 (GF). Substrate is bound at residue His135. Positions 181, 209, and 235 each coordinate pyridoxal 5'-phosphate. Lys238 is subject to N6-(pyridoxal phosphate)lysine. Residue Thr351 coordinates substrate.

It belongs to the class-II pyridoxal-phosphate-dependent aminotransferase family. BioF subfamily. As to quaternary structure, homodimer. Pyridoxal 5'-phosphate serves as cofactor.

It carries out the reaction 6-carboxyhexanoyl-[ACP] + L-alanine + H(+) = (8S)-8-amino-7-oxononanoate + holo-[ACP] + CO2. It participates in cofactor biosynthesis; biotin biosynthesis. Functionally, catalyzes the decarboxylative condensation of pimeloyl-[acyl-carrier protein] and L-alanine to produce 8-amino-7-oxononanoate (AON), [acyl-carrier protein], and carbon dioxide. The polypeptide is 8-amino-7-oxononanoate synthase (Aliivibrio salmonicida (strain LFI1238) (Vibrio salmonicida (strain LFI1238))).